The sequence spans 135 residues: MVFVWLTAFFLVVALIVLVIYQLMCLADLEFDYINPFDSSSRINKVVIPEFVLQAALSVLFLLSGHWAMFLLSAPMVYYNYTLYQRRQHLVDVTEIFNHLGREKKRRLFKIVGLIILLFLSLFWMIWTVLLEEDE.

A run of 3 helical transmembrane segments spans residues 2-22, 51-71, and 111-131; these read VFVW…VIYQ, FVLQ…AMFL, and IVGL…TVLL.

Belongs to the cornichon family. Interacts with HKT1;3.

The protein resides in the endoplasmic reticulum membrane. Its subcellular location is the golgi apparatus membrane. Its function is as follows. Acts as a cargo receptor necessary for the transportation of the cation transporter HKT1;3 and possibly other secretory proteins from the endoplasmic reticulum (ER) in COPII-coated vesicles targeted to the Golgi apparatus. This Oryza sativa subsp. japonica (Rice) protein is Protein cornichon homolog 1.